Here is a 98-residue protein sequence, read N- to C-terminus: NADH-ubiquinone oxidoreductase chain 4L (98 aa).

The next 3 helical transmembrane spans lie at 1–21, 26–46, and 61–81; these read MPLI…GVLI, LMSS…LVSL, and LILL…LVMV.

The protein belongs to the complex I subunit 4L family. In terms of assembly, core subunit of respiratory chain NADH dehydrogenase (Complex I) which is composed of 45 different subunits.

It localises to the mitochondrion inner membrane. The catalysed reaction is a ubiquinone + NADH + 5 H(+)(in) = a ubiquinol + NAD(+) + 4 H(+)(out). Core subunit of the mitochondrial membrane respiratory chain NADH dehydrogenase (Complex I) which catalyzes electron transfer from NADH through the respiratory chain, using ubiquinone as an electron acceptor. Part of the enzyme membrane arm which is embedded in the lipid bilayer and involved in proton translocation. The chain is NADH-ubiquinone oxidoreductase chain 4L (MT-ND4L) from Nycticebus coucang (Slow loris).